The primary structure comprises 156 residues: Endoribonuclease YbeY (156 aa).

Residues His-122, His-126, and His-132 each contribute to the Zn(2+) site.

Belongs to the endoribonuclease YbeY family. It depends on Zn(2+) as a cofactor.

The protein localises to the cytoplasm. Single strand-specific metallo-endoribonuclease involved in late-stage 70S ribosome quality control and in maturation of the 3' terminus of the 16S rRNA. This Pediococcus pentosaceus (strain ATCC 25745 / CCUG 21536 / LMG 10740 / 183-1w) protein is Endoribonuclease YbeY.